The following is a 341-amino-acid chain: MDYRQAGVDVEAGREFVSRIRQQVESTFRPEVMGGIGGFAGLFEIPAGYKAPVLVSGTDGVGTKLKIAQAMDQHHTIGIDLVAMCVNDILTTGAEPLYFLDYLATGKLEPAQLADVVTGIVEGCKQSGCALLGGETAEMPGFYGAGEYDAAGFAVGIVEKSQLLNGSQVNIGDVAIAVESSGVHSNGFSLVRKIIESNGWQWSDCLPEWGGQSLGEIFLEPTRIYVKPIQALLKSGINIHGMAHITGGGLPENLPRCLGQGQSIQVKAGSWQPLPVFNWLADKGQVNSTAMLETFNLGVGFVVLVSPEQRQTTLDFFSGQGLVANQIGTVIEGDGAFVWLD.

It belongs to the AIR synthase family.

The protein resides in the cytoplasm. The catalysed reaction is 2-formamido-N(1)-(5-O-phospho-beta-D-ribosyl)acetamidine + ATP = 5-amino-1-(5-phospho-beta-D-ribosyl)imidazole + ADP + phosphate + H(+). It participates in purine metabolism; IMP biosynthesis via de novo pathway; 5-amino-1-(5-phospho-D-ribosyl)imidazole from N(2)-formyl-N(1)-(5-phospho-D-ribosyl)glycinamide: step 2/2. The protein is Phosphoribosylformylglycinamidine cyclo-ligase of Synechocystis sp. (strain ATCC 27184 / PCC 6803 / Kazusa).